Here is a 473-residue protein sequence, read N- to C-terminus: UDP-N-acetylmuramoylalanine--D-glutamate ligase (473 aa).

Position 120–126 (Gly-120–Thr-126) interacts with ATP.

Belongs to the MurCDEF family.

The protein resides in the cytoplasm. It catalyses the reaction UDP-N-acetyl-alpha-D-muramoyl-L-alanine + D-glutamate + ATP = UDP-N-acetyl-alpha-D-muramoyl-L-alanyl-D-glutamate + ADP + phosphate + H(+). It participates in cell wall biogenesis; peptidoglycan biosynthesis. Functionally, cell wall formation. Catalyzes the addition of glutamate to the nucleotide precursor UDP-N-acetylmuramoyl-L-alanine (UMA). The chain is UDP-N-acetylmuramoylalanine--D-glutamate ligase from Nitrosospira multiformis (strain ATCC 25196 / NCIMB 11849 / C 71).